Here is a 49-residue protein sequence, read N- to C-terminus: Large ribosomal subunit protein bL36 (49 aa).

It belongs to the bacterial ribosomal protein bL36 family.

This is Large ribosomal subunit protein bL36 from Delftia acidovorans (strain DSM 14801 / SPH-1).